Here is a 191-residue protein sequence, read N- to C-terminus: Corrinoid adenosyltransferase (191 aa).

ATP-binding positions include 10-18 (TRTGDNGTT), Lys-28, 140-145 (RRAERS), and Asn-166.

The protein belongs to the Cob(I)alamin adenosyltransferase family.

The protein resides in the cytoplasm. It catalyses the reaction 2 cob(II)yrinate a,c diamide + reduced [electron-transfer flavoprotein] + 2 ATP = 2 adenosylcob(III)yrinate a,c-diamide + 2 triphosphate + oxidized [electron-transfer flavoprotein] + 3 H(+). It carries out the reaction 2 cob(II)alamin + reduced [electron-transfer flavoprotein] + 2 ATP = 2 adenosylcob(III)alamin + 2 triphosphate + oxidized [electron-transfer flavoprotein] + 3 H(+). It participates in cofactor biosynthesis; adenosylcobalamin biosynthesis; adenosylcobalamin from cob(II)yrinate a,c-diamide: step 2/7. The chain is Corrinoid adenosyltransferase from Mycobacterium leprae (strain TN).